Reading from the N-terminus, the 88-residue chain is Small ribosomal subunit protein uS15 (88 aa).

Belongs to the universal ribosomal protein uS15 family. Part of the 30S ribosomal subunit. Forms a bridge to the 50S subunit in the 70S ribosome, contacting the 23S rRNA.

Its function is as follows. One of the primary rRNA binding proteins, it binds directly to 16S rRNA where it helps nucleate assembly of the platform of the 30S subunit by binding and bridging several RNA helices of the 16S rRNA. Forms an intersubunit bridge (bridge B4) with the 23S rRNA of the 50S subunit in the ribosome. This is Small ribosomal subunit protein uS15 from Polaromonas sp. (strain JS666 / ATCC BAA-500).